We begin with the raw amino-acid sequence, 62 residues long: Small ribosomal subunit protein uS14 (62 aa).

4 residues coordinate Zn(2+): Cys25, Cys28, Cys41, and Cys44.

The protein belongs to the universal ribosomal protein uS14 family. Zinc-binding uS14 subfamily. In terms of assembly, part of the 30S ribosomal subunit. Contacts proteins S3 and S10. Zn(2+) serves as cofactor.

Binds 16S rRNA, required for the assembly of 30S particles and may also be responsible for determining the conformation of the 16S rRNA at the A site. In Sulfurihydrogenibium sp. (strain YO3AOP1), this protein is Small ribosomal subunit protein uS14.